We begin with the raw amino-acid sequence, 203 residues long: Holliday junction branch migration complex subunit RuvA (203 aa).

Residues 1 to 64 (MIGRLRGYIL…EDAQLLYGFN (64 aa)) are domain I. The tract at residues 65 to 142 (DKQERALFRE…KGLNGDLFNN (78 aa)) is domain II. The segment at 143–154 (SSEITLPTAAQA) is flexible linker. Positions 155–203 (AELDAEAEAASALVALGYKPQEASRMVSKIAKPGADCETLIRDALRAAL) are domain III.

This sequence belongs to the RuvA family. In terms of assembly, homotetramer. Forms an RuvA(8)-RuvB(12)-Holliday junction (HJ) complex. HJ DNA is sandwiched between 2 RuvA tetramers; dsDNA enters through RuvA and exits via RuvB. An RuvB hexamer assembles on each DNA strand where it exits the tetramer. Each RuvB hexamer is contacted by two RuvA subunits (via domain III) on 2 adjacent RuvB subunits; this complex drives branch migration. In the full resolvosome a probable DNA-RuvA(4)-RuvB(12)-RuvC(2) complex forms which resolves the HJ.

The protein resides in the cytoplasm. Its function is as follows. The RuvA-RuvB-RuvC complex processes Holliday junction (HJ) DNA during genetic recombination and DNA repair, while the RuvA-RuvB complex plays an important role in the rescue of blocked DNA replication forks via replication fork reversal (RFR). RuvA specifically binds to HJ cruciform DNA, conferring on it an open structure. The RuvB hexamer acts as an ATP-dependent pump, pulling dsDNA into and through the RuvAB complex. HJ branch migration allows RuvC to scan DNA until it finds its consensus sequence, where it cleaves and resolves the cruciform DNA. In Serratia proteamaculans (strain 568), this protein is Holliday junction branch migration complex subunit RuvA.